We begin with the raw amino-acid sequence, 220 residues long: Flavin-dependent thymidylate synthase (220 aa).

Positions methionine 1–tyrosine 208 constitute a ThyX domain. FAD-binding positions include threonine 55, arginine 78–arginine 80, and glutamate 86. DUMP contacts are provided by residues glutamine 75–arginine 78, glutamate 86–arginine 90, and arginine 147. The short motif at arginine 78–serine 88 is the ThyX motif element. Residues asparagine 163–arginine 165 and asparagine 169 contribute to the FAD site. Position 174 (arginine 174) interacts with dUMP. Arginine 174 serves as the catalytic Involved in ionization of N3 of dUMP, leading to its activation.

This sequence belongs to the thymidylate synthase ThyX family. In terms of assembly, homotetramer. FAD is required as a cofactor.

The enzyme catalyses dUMP + (6R)-5,10-methylene-5,6,7,8-tetrahydrofolate + NADPH + H(+) = dTMP + (6S)-5,6,7,8-tetrahydrofolate + NADP(+). The protein operates within pyrimidine metabolism; dTTP biosynthesis. Catalyzes the reductive methylation of 2'-deoxyuridine-5'-monophosphate (dUMP) to 2'-deoxythymidine-5'-monophosphate (dTMP) while utilizing 5,10-methylenetetrahydrofolate (mTHF) as the methyl donor, and NADPH and FADH(2) as the reductant. The protein is Flavin-dependent thymidylate synthase of Thermotoga sp. (strain RQ2).